A 473-amino-acid polypeptide reads, in one-letter code: Hyaluronidase-2 (473 aa).

An N-terminal signal peptide occupies residues 1-20 (MRAGLGPIITLALVLEVAWA). 2 cysteine pairs are disulfide-bonded: cysteine 47–cysteine 340 and cysteine 211–cysteine 227. Residues asparagine 74 and asparagine 103 are each glycosylated (N-linked (GlcNAc...) asparagine). Glutamate 135 functions as the Proton donor in the catalytic mechanism. A glycan (N-linked (GlcNAc...) asparagine) is linked at asparagine 357. Residues 361 to 439 (ATQYCSWTQC…YLGWGGEQCQ (79 aa)) form the EGF-like domain. 3 cysteine pairs are disulfide-bonded: cysteine 365-cysteine 376, cysteine 370-cysteine 427, and cysteine 429-cysteine 438. N-linked (GlcNAc...) asparagine glycosylation is present at asparagine 390. A lipid anchor (GPI-anchor amidated asparagine; alternate) is attached at asparagine 448. Asparagine 448 is a glycosylation site (N-linked (GlcNAc...) asparagine; alternate). A propeptide spans 449-473 (ASRAWAGSHLTSLLGLVAVALTWTL) (removed in mature form).

Belongs to the glycosyl hydrolase 56 family. In terms of assembly, interacts with MST1R. Widely expressed, with highest expression levels in kidney, lung and liver (at protein level).

The protein resides in the cell membrane. It carries out the reaction Random hydrolysis of (1-&gt;4)-linkages between N-acetyl-beta-D-glucosamine and D-glucuronate residues in hyaluronate.. Functionally, catalyzes hyaluronan degradation into small fragments that are endocytosed and degraded in lysosomes by HYAL1 and exoglycosidases. Essential for the breakdown of extracellular matrix hyaluronan. In Mus musculus (Mouse), this protein is Hyaluronidase-2 (Hyal2).